The primary structure comprises 408 residues: Multidrug resistance protein MdtG (408 aa).

11 helical membrane-spanning segments follow: residues 16-36 (LIVA…VMPF), 58-78 (IVFS…GGLA), 92-112 (LGMG…QFLI), 115-135 (ALLG…ATQV), 146-166 (TLST…GLLA), 173-193 (PVFF…LFCI), 224-244 (LFVT…ILTL), 256-276 (VAFI…LSAP), 290-310 (ILIT…YVQT), 319-339 (FLLG…LVYN), and 378-398 (AVFL…WNSL).

The protein belongs to the major facilitator superfamily. DHA1 family. MdtG (TC 2.A.1.2.20) subfamily.

It is found in the cell inner membrane. Confers resistance to fosfomycin and deoxycholate. In Escherichia coli O6:K15:H31 (strain 536 / UPEC), this protein is Multidrug resistance protein MdtG.